Reading from the N-terminus, the 257-residue chain is Acetylglutamate kinase (257 aa).

Substrate-binding positions include 43-44 (GG), Arg65, and Asn157. ATP-binding positions include 180 to 185 (DVSGIL) and 208 to 210 (IIT).

The protein belongs to the acetylglutamate kinase family. ArgB subfamily. As to quaternary structure, homodimer.

Its subcellular location is the cytoplasm. The catalysed reaction is N-acetyl-L-glutamate + ATP = N-acetyl-L-glutamyl 5-phosphate + ADP. It functions in the pathway amino-acid biosynthesis; L-arginine biosynthesis; N(2)-acetyl-L-ornithine from L-glutamate: step 2/4. Catalyzes the ATP-dependent phosphorylation of N-acetyl-L-glutamate. This is Acetylglutamate kinase from Serratia proteamaculans (strain 568).